Here is a 552-residue protein sequence, read N- to C-terminus: Urocanate hydratase (552 aa).

NAD(+) is bound by residues 48-49 (GG), Q126, 172-174 (GMG), D192, 238-239 (NA), 259-263 (QTSAH), 268-269 (YL), and Y317. Residue C405 is part of the active site. Position 487 (G487) interacts with NAD(+).

The protein belongs to the urocanase family. NAD(+) serves as cofactor.

The protein resides in the cytoplasm. It catalyses the reaction 4-imidazolone-5-propanoate = trans-urocanate + H2O. Its pathway is amino-acid degradation; L-histidine degradation into L-glutamate; N-formimidoyl-L-glutamate from L-histidine: step 2/3. Functionally, catalyzes the conversion of urocanate to 4-imidazolone-5-propionate. The polypeptide is Urocanate hydratase (Streptomyces griseus subsp. griseus (strain JCM 4626 / CBS 651.72 / NBRC 13350 / KCC S-0626 / ISP 5235)).